The following is a 132-amino-acid chain: Small ribosomal subunit protein uS8 (132 aa).

The protein belongs to the universal ribosomal protein uS8 family. As to quaternary structure, part of the 30S ribosomal subunit. Contacts proteins S5 and S12.

In terms of biological role, one of the primary rRNA binding proteins, it binds directly to 16S rRNA central domain where it helps coordinate assembly of the platform of the 30S subunit. The polypeptide is Small ribosomal subunit protein uS8 (Francisella tularensis subsp. tularensis (strain FSC 198)).